The primary structure comprises 714 residues: Polyribonucleotide nucleotidyltransferase (714 aa).

2 residues coordinate Mg(2+): D487 and D493. The region spanning 554–613 (PRIEVMTIPVDKIREVIGSGGKVIREIVEKTGAKINIEDDGTIKIASASGKEIEAARKWI) is the KH domain. The S1 motif domain occupies 623–691 (GVVYEGTVVK…ERGKVRLSMK (69 aa)).

It belongs to the polyribonucleotide nucleotidyltransferase family. Requires Mg(2+) as cofactor.

Its subcellular location is the cytoplasm. It catalyses the reaction RNA(n+1) + phosphate = RNA(n) + a ribonucleoside 5'-diphosphate. In terms of biological role, involved in mRNA degradation. Catalyzes the phosphorolysis of single-stranded polyribonucleotides processively in the 3'- to 5'-direction. The sequence is that of Polyribonucleotide nucleotidyltransferase from Allorhizobium ampelinum (strain ATCC BAA-846 / DSM 112012 / S4) (Agrobacterium vitis (strain S4)).